A 583-amino-acid chain; its full sequence is Lamin-B3 (583 aa).

A disordered region spans residues 1-30 (MATSTPSRAREHASAAQSPGSPTRISRMQE). Positions 2-32 (ATSTPSRAREHASAAQSPGSPTRISRMQEKE) are head. A compositionally biased stretch (polar residues) spans 15 to 26 (AAQSPGSPTRIS). Ser-21 carries the post-translational modification Phosphoserine. The IF rod domain maps to 30–386 (EKEDLRHLND…KMLEGEEQRL (357 aa)). The interval 33–67 (DLRHLNDRLAAYIERVRSLEADKSLLKIQLEEREE) is coil 1A. The linker 1 stretch occupies residues 68-79 (VSSREVTNLRQL). Positions 80-215 (YETELADARK…QKNIHTQEVK (136 aa)) are coil 1B. The linker 2 stretch occupies residues 216-242 (EIKKRHDTRIVEIDSGRRVEFESKLAE). Residues 243 to 384 (ALQELRRDHE…YRKMLEGEEQ (142 aa)) form a coil 2 region. Positions 383–431 (EQRLKLSPSPSQRSTVSRASTSQTSRLLRGKKRKLDETGRSVTKRSYKV) are disordered. Residues 385–580 (RLKLSPSPSQ…QSHQSVDPSC (196 aa)) form a tail region. Polar residues predominate over residues 390-408 (PSPSQRSTVSRASTSQTSR). Residue Ser-391 is modified to Phosphoserine. The 118-residue stretch at 429 to 546 (YKVVQQASST…EECAERTLYR (118 aa)) folds into the LTD domain. At Cys-580 the chain carries Cysteine methyl ester. Cys-580 carries S-farnesyl cysteine lipidation. Residues 581–583 (SIM) constitute a propeptide, removed in mature form.

The protein belongs to the intermediate filament family. In terms of processing, phosphorylation plays a key role in lamin organization, subcellular localization and nuclear envelope disintegration. Phosphorylation by CDK1 at Ser-21 at the onset of mitosis drives lamin disassembly and nuclear envelope breakdown.

It is found in the nucleus lamina. The protein resides in the nucleus envelope. Its subcellular location is the nucleus. It localises to the nucleoplasm. The protein localises to the nucleus matrix. Its function is as follows. Lamins are intermediate filament proteins that assemble into a filamentous meshwork, and which constitute the major components of the nuclear lamina, a fibrous layer on the nucleoplasmic side of the inner nuclear membrane. Lamins provide a framework for the nuclear envelope, bridging the nuclear envelope and chromatin, thereby playing an important role in nuclear assembly, chromatin organization, nuclear membrane and telomere dynamics. The structural integrity of the lamina is strictly controlled by the cell cycle, as seen by the disintegration and formation of the nuclear envelope in prophase and telophase, respectively. The sequence is that of Lamin-B3 (lmnb3.L) from Xenopus laevis (African clawed frog).